Here is a 254-residue protein sequence, read N- to C-terminus: MTPAFELQGVQFAYKGVPALNGLDLTLPLGRRTALLGANGSGKSTLLRLLDGLQFPAAGRISAFGTPLTEAMFTDEAAAIAFRRRVGFVFQNPEVQLFCPSVFDELAFGPLQLHWPKERIRARVARAIAQFGLGPLAGRPPHRLSGGEKKRVALASVLILDPEVLLLDEPTAALDPQATDDIAALLETEFGARNPGRTLIFSSHDLDLVARIADHVVVLEAGKVAAAGPAAEVLARTALLRRARLLPGFDGTAP.

An ABC transporter domain is found at phenylalanine 5–leucine 246. Glycine 37 to serine 44 is a binding site for ATP.

It belongs to the ABC transporter superfamily. In terms of assembly, forms an energy-coupling factor (ECF) transporter complex composed of an ATP-binding protein (A component, NikO), a transmembrane protein (T component, NikQ) and a fused possible substrate-capture protein (S component, NikMN) of unknown stoichimetry.

The protein localises to the cell inner membrane. It carries out the reaction Ni(2+)(out) + ATP + H2O = Ni(2+)(in) + ADP + phosphate + H(+). Its function is as follows. Part of the energy-coupling factor (ECF) transporter complex NikMNQO involved in nickel import. The complex confers nickel uptake upon expression in E.coli. Shows very low activity with cobalt. Presumably responsible for energy coupling to the transport system. This is Nickel import ATP-binding protein NikO from Rhodobacter capsulatus (strain ATCC BAA-309 / NBRC 16581 / SB1003).